Reading from the N-terminus, the 233-residue chain is Coproporphyrinogen-III oxidase 2, chloroplastic (233 aa).

A chloroplast-targeting transit peptide spans 1-48 (MASHSSTLFTSPSSFILFSSHRLKSSPNYFTYHFPRSVKRPHFDLRCS). A substrate-binding site is contributed by S174. H188 acts as the Proton donor in catalysis.

This sequence belongs to the aerobic coproporphyrinogen-III oxidase family. Homodimer.

It is found in the plastid. The protein resides in the chloroplast. It carries out the reaction coproporphyrinogen III + O2 + 2 H(+) = protoporphyrinogen IX + 2 CO2 + 2 H2O. Its pathway is porphyrin-containing compound metabolism; protoporphyrin-IX biosynthesis; protoporphyrinogen-IX from coproporphyrinogen-III (O2 route): step 1/1. It functions in the pathway porphyrin-containing compound metabolism; chlorophyll biosynthesis. In terms of biological role, key enzyme in heme biosynthesis. Catalyzes the oxidative decarboxylation of propionic acid side chains of rings A and B of coproporphyrinogen III. This chain is Coproporphyrinogen-III oxidase 2, chloroplastic (CPX2), found in Arabidopsis thaliana (Mouse-ear cress).